Here is a 405-residue protein sequence, read N- to C-terminus: Ubiquitin-like modifier-activating enzyme 5 (405 aa).

The interval 1-44 (MATVEELQTRVKQLEEELERERTRNRGGTDGGGGRKKIDQMSSE) is disordered. Positions 7-24 (LQTRVKQLEEELERERTR) are enriched in basic and acidic residues. The ATP site is built by Gly81, Asp102, Lys125, Asn148, and Asn182. Cys224 and Cys227 together coordinate Zn(2+). Cys248 serves as the catalytic Glycyl thioester intermediate. Zn(2+) contacts are provided by Cys301 and Cys306. The linker stretch occupies residues 346–377 (AETTEEELKAASHGHVPELVEGVHVAYVRPMT). The UFC1-binding sequence (UFC) signature appears at 390–405 (DDQESLEDLMAKMKSI).

This sequence belongs to the ubiquitin-activating E1 family. UBA5 subfamily. Homodimer; homodimerization is required for UFM1 activation. Interacts (via UIS motif) with UFM1; binds UFM1 via a trans-binding mechanism in which UFM1 interacts with distinct sites in both subunits of the UBA5 homodimer. Interacts (via C-terminus) with UFC1.

Its subcellular location is the cytoplasm. The protein resides in the nucleus. The protein localises to the endoplasmic reticulum membrane. It is found in the golgi apparatus. Functionally, E1-like enzyme which specifically catalyzes the first step in ufmylation. Activates UFM1 by first adenylating its C-terminal glycine residue with ATP, and thereafter linking this residue to the side chain of a cysteine residue in E1, yielding a UFM1-E1 thioester and free AMP. Activates UFM1 via a trans-binding mechanism, in which UFM1 interacts with distinct sites in both subunits of the UBA5 homodimer. Trans-binding also promotes stabilization of the UBA5 homodimer, and enhances ATP-binding. Transfer of UFM1 from UBA5 to the E2-like enzyme UFC1 also takes place using a trans mechanism. This chain is Ubiquitin-like modifier-activating enzyme 5, found in Branchiostoma floridae (Florida lancelet).